Here is a 686-residue protein sequence, read N- to C-terminus: Translation initiation factor IF-2 (686 aa).

Residues 53–105 (EKPSVADEFEVEEKVVRSKKNSNKKKKKGKGNEDKRQENFAGRQQTQTVETPD) form a disordered region. The segment covering 69 to 81 (RSKKNSNKKKKKG) has biased composition (basic residues). The 170-residue stretch at 188–357 (ERPAVVTIMG…LLVSEVEEYK (170 aa)) folds into the tr-type G domain. A G1 region spans residues 197–204 (GHVDHGKT). Position 197 to 204 (197 to 204 (GHVDHGKT)) interacts with GTP. Positions 222–226 (GITQH) are G2. The segment at 243-246 (DTPG) is G3. GTP is bound by residues 243 to 247 (DTPGH) and 297 to 300 (NKMD). Residues 297-300 (NKMD) are G4. The tract at residues 333–335 (SAI) is G5.

Belongs to the TRAFAC class translation factor GTPase superfamily. Classic translation factor GTPase family. IF-2 subfamily.

Its subcellular location is the cytoplasm. Its function is as follows. One of the essential components for the initiation of protein synthesis. Protects formylmethionyl-tRNA from spontaneous hydrolysis and promotes its binding to the 30S ribosomal subunits. Also involved in the hydrolysis of GTP during the formation of the 70S ribosomal complex. This chain is Translation initiation factor IF-2, found in Bacillus cereus (strain ATCC 10987 / NRS 248).